Here is a 465-residue protein sequence, read N- to C-terminus: Endolysin PlyC, large catalytic subunit (465 aa).

Positions S2–I205 are glycosidase activity. Disordered stretches follow at residues S204–E226 and T289–G309. Composition is skewed to polar residues over residues S213–E226 and T289–G307. The Peptidase C51 domain maps to S308–K465. Residues C333 and H420 each act as for amidase activity in the active site.

In terms of assembly, part of the PlyC holoenzyme, which is composed of 1 PlyCA and 8 PlyCB assembled as a ring.

The catalysed reaction is Hydrolyzes the link between N-acetylmuramoyl residues and L-amino acid residues in certain cell-wall glycopeptides.. Its function is as follows. Component of the endolysin PlyC that degrades the host peptidoglycans and participates with the holin protein in the sequential events which lead to the programmed host cell lysis releasing the mature viral particles. Once the holin has permeabilized the host cell membrane, the endolysin can reach the periplasm and breaking down the peptidoglycan layer. When associated with the small subunit PlyCB, the large subunit PlyCA displays 2 catalytic activities, amidase and glycosyl hydrolase. Cleaves the amide bond between N-acetyl muramic acid and L-alanine in the host peptidoglycan. PlyC is an extremely potent endolysin. This chain is Endolysin PlyC, large catalytic subunit (orf11), found in Streptococcus phage C1.